The chain runs to 504 residues: GTPase Obg (504 aa).

Residues 2-159 (SQFVDRVVLH…KDVTLELKSM (158 aa)) enclose the Obg domain. Positions 68–88 (AERGNNGAGDDRHGARGKDLT) are disordered. Residues 160-340 (ADVGLVGFPS…LRFALMDIVR (181 aa)) form the OBG-type G domain. GTP contacts are provided by residues 166-173 (GFPSAGKS), 191-195 (FTTLA), 212-215 (DVPG), 292-295 (NKMD), and 321-323 (STV). Residues Ser173 and Thr193 each coordinate Mg(2+). Residues 364 to 444 (KRKGRFADFE…IGGITFEWDP (81 aa)) enclose the OCT domain. A disordered region spans residues 449 to 481 (GVDQTPAYGRGKDRRLEQTDRVTAEQRKRASQA). The segment covering 458-476 (RGKDRRLEQTDRVTAEQRK) has biased composition (basic and acidic residues).

It belongs to the TRAFAC class OBG-HflX-like GTPase superfamily. OBG GTPase family. In terms of assembly, monomer. Requires Mg(2+) as cofactor.

The protein resides in the cytoplasm. An essential GTPase which binds GTP, GDP and possibly (p)ppGpp with moderate affinity, with high nucleotide exchange rates and a fairly low GTP hydrolysis rate. Plays a role in control of the cell cycle, stress response, ribosome biogenesis and in those bacteria that undergo differentiation, in morphogenesis control. The chain is GTPase Obg from Corynebacterium urealyticum (strain ATCC 43042 / DSM 7109).